Reading from the N-terminus, the 207-residue chain is Small ribosomal subunit protein uS4c (207 aa).

One can recognise an S4 RNA-binding domain in the interval 92–156 (MRLDNILFRL…YQSIITKRIE (65 aa)).

Belongs to the universal ribosomal protein uS4 family. As to quaternary structure, part of the 30S ribosomal subunit. Contacts protein S5. The interaction surface between S4 and S5 is involved in control of translational fidelity.

It is found in the plastid. The protein resides in the chloroplast. One of the primary rRNA binding proteins, it binds directly to 16S rRNA where it nucleates assembly of the body of the 30S subunit. In terms of biological role, with S5 and S12 plays an important role in translational accuracy. This is Small ribosomal subunit protein uS4c (rps4) from Equisetum arvense (Field horsetail).